The following is a 715-amino-acid chain: Lanosterol synthase erg7B (715 aa).

The PFTB 1 repeat unit spans residues 111 to 153 (AIEIKNYLMARANPVDGGWGLHSEGDSSVFGTSLNYTVLRLLG). Asp-445 functions as the Proton donor in the catalytic mechanism. PFTB repeat units lie at residues 550–590 (IQRG…RSAG) and 599–640 (VRRG…VVQT).

The protein belongs to the terpene cyclase/mutase family.

It localises to the lipid droplet. The protein resides in the endoplasmic reticulum membrane. It catalyses the reaction (S)-2,3-epoxysqualene = lanosterol. Its pathway is steroid metabolism; ergosterol biosynthesis. Lanosterol synthase; part of the third module of ergosterol biosynthesis pathway that includes the late steps of the pathway. ERG7A and ERG7B catalyze the cyclization of (S)-2,3 oxidosqualene to lanosterol, a reaction that forms the sterol core. The third module or late pathway involves the ergosterol synthesis itself through consecutive reactions that mainly occur in the endoplasmic reticulum (ER) membrane. Firstly, the squalene synthase erg9 catalyzes the condensation of 2 farnesyl pyrophosphate moieties to form squalene, which is the precursor of all steroids. Squalene synthase is crucial for balancing the incorporation of farnesyl diphosphate (FPP) into sterol and nonsterol isoprene synthesis. Secondly, squalene is converted into lanosterol by the consecutive action of the squalene epoxidase erg1 and the lanosterol synthase erg7. Then, the delta(24)-sterol C-methyltransferase erg6 methylates lanosterol at C-24 to produce eburicol. Eburicol is the substrate of the sterol 14-alpha demethylase encoded by cyp51A and cyp51B, to yield 4,4,24-trimethyl ergosta-8,14,24(28)-trienol. The C-14 reductase erg24 then reduces the C14=C15 double bond which leads to 4,4-dimethylfecosterol. A sequence of further demethylations at C-4, involving the C-4 demethylation complex containing the C-4 methylsterol oxidases erg25A or erg25B, the sterol-4-alpha-carboxylate 3-dehydrogenase erg26 and the 3-keto-steroid reductase erg27, leads to the production of fecosterol via 4-methylfecosterol. The C-8 sterol isomerase erg2 then catalyzes the reaction which results in unsaturation at C-7 in the B ring of sterols and thus converts fecosterol to episterol. The sterol-C5-desaturase erg3B then catalyzes the introduction of a C-5 double bond in the B ring to produce 5-dehydroepisterol. The 2 other sterol-C5-desaturases, erg3A and erg3C, seem to be less important in ergosterol biosynthesis. The C-22 sterol desaturase erg5 further converts 5-dehydroepisterol into ergosta-5,7,22,24(28)-tetraen-3beta-ol by forming the C-22(23) double bond in the sterol side chain. Finally, ergosta-5,7,22,24(28)-tetraen-3beta-ol is substrate of the C-24(28) sterol reductases erg4A and erg4B to produce ergosterol. Possible alternative sterol biosynthetic pathways might exist from fecosterol to ergosterol, depending on the activities of the erg3 isoforms. The chain is Lanosterol synthase erg7B from Aspergillus fumigatus (strain ATCC MYA-4609 / CBS 101355 / FGSC A1100 / Af293) (Neosartorya fumigata).